The chain runs to 499 residues: Glycerol kinase (499 aa).

Threonine 13 provides a ligand contact to ADP. The ATP site is built by threonine 13, threonine 14, and serine 15. Residue threonine 13 coordinates sn-glycerol 3-phosphate. Arginine 17 provides a ligand contact to ADP. 4 residues coordinate sn-glycerol 3-phosphate: arginine 83, glutamate 84, tyrosine 136, and aspartate 246. Glycerol is bound by residues arginine 83, glutamate 84, tyrosine 136, aspartate 246, and glutamine 247. Positions 268 and 311 each coordinate ADP. The ATP site is built by threonine 268, glycine 311, glutamine 315, and glycine 412. ADP-binding residues include glycine 412 and asparagine 416.

It belongs to the FGGY kinase family.

It catalyses the reaction glycerol + ATP = sn-glycerol 3-phosphate + ADP + H(+). It functions in the pathway polyol metabolism; glycerol degradation via glycerol kinase pathway; sn-glycerol 3-phosphate from glycerol: step 1/1. With respect to regulation, inhibited by fructose 1,6-bisphosphate (FBP). In terms of biological role, key enzyme in the regulation of glycerol uptake and metabolism. Catalyzes the phosphorylation of glycerol to yield sn-glycerol 3-phosphate. The polypeptide is Glycerol kinase (Francisella philomiragia subsp. philomiragia (strain ATCC 25017 / CCUG 19701 / FSC 153 / O#319-036)).